A 337-amino-acid polypeptide reads, in one-letter code: DnaJ homolog dnj-2 (337 aa).

The chain crosses the membrane as a helical span at residues 4–24 (AIAAPILFLLVSFFVQECESV). Positions 36–105 (NCYDVLEVNR…EAKTNYDYYL (70 aa)) constitute a J domain. A run of 2 helical transmembrane segments spans residues 127-147 (VDLR…QFLS) and 222-242 (LAWH…WTAL). The stretch at 293 to 323 (LKRNCATWKAERDAAEQEKMAQSGRYKRYKR) forms a coiled coil.

It belongs to the DNAJC25 family.

The protein resides in the membrane. This is DnaJ homolog dnj-2 (dnj-2) from Caenorhabditis elegans.